We begin with the raw amino-acid sequence, 98 residues long: DNA-binding protein Fis (98 aa).

Residues 74-93 (QTRAALMLGINRSTLRKKLK) constitute a DNA-binding region (H-T-H motif).

This sequence belongs to the transcriptional regulatory Fis family. Homodimer.

Functionally, activates ribosomal RNA transcription. Plays a direct role in upstream activation of rRNA promoters. The chain is DNA-binding protein Fis from Buchnera aphidicola subsp. Acyrthosiphon pisum (strain 5A).